The chain runs to 186 residues: Ribosome rescue factor SmrB (186 aa).

Positions 99–174 (IDLHGLTQHQ…SDAAIIVIIE (76 aa)) constitute a Smr domain.

Belongs to the SmrB family. In terms of assembly, associates with collided ribosomes, but not with correctly translating polysomes.

Acts as a ribosome collision sensor. Detects stalled/collided disomes (pairs of ribosomes where the leading ribosome is stalled and a second ribosome has collided with it) and endonucleolytically cleaves mRNA at the 5' boundary of the stalled ribosome. Stalled/collided disomes form a new interface (primarily via the 30S subunits) that binds SmrB. Cleaved mRNA becomes available for tmRNA ligation, leading to ribosomal subunit dissociation and rescue of stalled ribosomes. The protein is Ribosome rescue factor SmrB of Buchnera aphidicola subsp. Acyrthosiphon pisum (strain 5A).